Here is a 236-residue protein sequence, read N- to C-terminus: Small ribosomal subunit protein uS2c (236 aa).

This sequence belongs to the universal ribosomal protein uS2 family.

Its subcellular location is the plastid. It localises to the chloroplast. This chain is Small ribosomal subunit protein uS2c (rps2), found in Buxus microphylla (Littleleaf boxwood).